A 341-amino-acid polypeptide reads, in one-letter code: MDSYVTVDPSFHSPRISLEILVPTKYAKLFTLKQLSRMLALSCKHRARQAANPVSKRTSRDRNGSKTMGQGPSAVAPQVSKGHNQQVDGGVCLAPVKSKRAVRREKRRTAAKKATNKAKTETKLVKKGGSSIHAPKAPKRTSYLSSLLSSPSGAKAKMGALSKPPQTKNAPDANEGGFTLTAITPAECRAEARRRFHPITGSSRGPYGFCTRSREGCGVCADCVEKKAHLDFNRSFDTIGTSRVIRVDSMMEEVAEDLASPSVLEPSGFWAPAEKQAPSGEGHSRRRCDVVTLARVTPVLRMLRKVDPTLVDNRLLWEAAFRTVFPQRKCVYPHGCFCDRG.

Positions Arg-46–Glu-175 are disordered. Positions Lys-97–Asn-116 are enriched in basic residues. Over residues Ser-142–Ser-152 the composition is skewed to low complexity.

This sequence belongs to the nepovirus protein P3 family.

This is Protein P3 from Vitis rupestris (Grape).